The primary structure comprises 445 residues: 23S rRNA (uracil(1939)-C(5))-methyltransferase RlmD (445 aa).

Positions 12–70 (SKQLSSKLSLNVTQLDHLGAGIAHHQGKIVFINGALPGETVQVQLTEQKKKFSRAKLLK) constitute a TRAM domain. [4Fe-4S] cluster-binding residues include Cys83, Cys89, Cys92, and Cys171. S-adenosyl-L-methionine contacts are provided by Gln278, Phe307, Asn312, Glu328, Asp355, and Asp375. The active-site Nucleophile is the Cys401.

Belongs to the class I-like SAM-binding methyltransferase superfamily. RNA M5U methyltransferase family. RlmD subfamily.

The catalysed reaction is uridine(1939) in 23S rRNA + S-adenosyl-L-methionine = 5-methyluridine(1939) in 23S rRNA + S-adenosyl-L-homocysteine + H(+). Functionally, catalyzes the formation of 5-methyl-uridine at position 1939 (m5U1939) in 23S rRNA. The protein is 23S rRNA (uracil(1939)-C(5))-methyltransferase RlmD of Shewanella piezotolerans (strain WP3 / JCM 13877).